Reading from the N-terminus, the 191-residue chain is MELDVFAGQEKSELSMIEVARAILETRGRDKEMYFNDLVNEIQNYLEKSDADIRSALPFFYSDLNTDGSFIPLGDNKWGLRSWYAIDEIDEEVITLEDIDENAPKRKNKKVNAFMDGDEDAIDYNDDDPEDENFTPSSAILEYDNDNEDDENAEVESYDSELNEIIPDDDLDDVELSEEDDDDDYEDETND.

An HTH HARE-type domain is found at 14–83; that stretch reads LSMIEVARAI…GDNKWGLRSW (70 aa). 2 stretches are compositionally biased toward acidic residues: residues 119 to 133 and 143 to 191; these read EDAI…EDEN and YDND…ETND. Residues 119–191 form a disordered region; the sequence is EDAIDYNDDD…DDDYEDETND (73 aa).

Belongs to the RpoE family. In terms of assembly, RNAP is composed of a core of 2 alpha, a beta and a beta' subunits. The core is associated with a delta subunit and one of several sigma factors.

In terms of biological role, participates in both the initiation and recycling phases of transcription. In the presence of the delta subunit, RNAP displays an increased specificity of transcription, a decreased affinity for nucleic acids, and an increased efficiency of RNA synthesis because of enhanced recycling. The protein is Probable DNA-directed RNA polymerase subunit delta of Streptococcus thermophilus (strain ATCC BAA-491 / LMD-9).